The following is a 424-amino-acid chain: MLWQTFFSSLLLLSLLFGCNGDESLPEVTDSEEAPMDKREREALYSAIQGFVGDSWNGSALYPDPCGWTPIQGVSCDIYNDLWYVTDLSLGLIYENSLPCSSSLQIRPELFELKHLRSLSFFNCFISPMVIAKEELWTNFASNLESLEFRSNPGLIGELPETIGNLTKLKSLVVLENGFSGELPASICNLKRLKRLVFAGNSFAGMIPNCFKGLKELLILDLSRNSFSGTLPTSFGDLVSLLKLDLSNNLLEGNLPQELGFLKNLTLLDLRNNRFSGGLSKNIENIQSLTELVLSNNPMGEEDMVGTNWGKMSNLVVLDLSKMGLRGEIPTSLTNLKRLRFLGLNNNNLTGFVPSKKLEALPCLGALYINGNNLTGELRFSTKFYEKMGRRFKASKNPNLCQPLEMVMSESHKHLSPLGVKPCT.

The N-terminal stretch at 1–21 (MLWQTFFSSLLLLSLLFGCNG) is a signal peptide. 10 LRR repeats span residues 141 to 166 (ASNL…IGNL), 167 to 190 (TKLK…ICNL), 191 to 213 (KRLK…CFKG), 214 to 237 (LKEL…SFGD), 238 to 263 (LVSL…GFLK), 265 to 286 (LTLL…IENI), 287 to 311 (QSLT…NWGK), 312 to 336 (MSNL…LTNL), 337 to 360 (KRLR…KLEA), and 362 to 387 (PCLG…FYEK).

It is found in the cell membrane. Required for growth promotion and enhanced seed production mediated by the endophytic fungus Piriformospora indica. This Arabidopsis thaliana (Mouse-ear cress) protein is Piriformospora indica-insensitive protein 2 (PII-2).